We begin with the raw amino-acid sequence, 271 residues long: Virulence regulon transcriptional activator VirF (271 aa).

The region spanning 167–265 (ERLQKFMEEN…GCTPSQARLT (99 aa)) is the HTH araC/xylS-type domain. DNA-binding regions (H-T-H motif) lie at residues 184-205 (SKFAREFGMGLTTFKELFGTVY) and 232-255 (IVDIAMEAGFSSQSYFTQSYRRRF).

Its function is as follows. Transcriptional activator of the Yersinia virulence regulon. This chain is Virulence regulon transcriptional activator VirF (virF), found in Yersinia enterocolitica.